The chain runs to 269 residues: Glutamate racemase (269 aa).

Substrate contacts are provided by residues Asp14–Ser15 and Tyr46–Ser47. Cys78 functions as the Proton donor/acceptor in the catalytic mechanism. Asn79–Thr80 provides a ligand contact to substrate. Cys189 functions as the Proton donor/acceptor in the catalytic mechanism. Residue Thr190–His191 coordinates substrate.

It belongs to the aspartate/glutamate racemases family.

The enzyme catalyses L-glutamate = D-glutamate. The protein operates within cell wall biogenesis; peptidoglycan biosynthesis. Provides the (R)-glutamate required for cell wall biosynthesis. This is Glutamate racemase from Haemophilus influenzae (strain 86-028NP).